Here is a 260-residue protein sequence, read N- to C-terminus: Triosephosphate isomerase (260 aa).

11-13 contributes to the substrate binding site; it reads NWK. Catalysis depends on histidine 103, which acts as the Electrophile. Catalysis depends on glutamate 175, which acts as the Proton acceptor. Substrate contacts are provided by residues glycine 181, serine 220, and 241 to 242; that span reads GG.

It belongs to the triosephosphate isomerase family. Homodimer.

It is found in the cytoplasm. It carries out the reaction D-glyceraldehyde 3-phosphate = dihydroxyacetone phosphate. The protein operates within carbohydrate biosynthesis; gluconeogenesis. Its pathway is carbohydrate degradation; glycolysis; D-glyceraldehyde 3-phosphate from glycerone phosphate: step 1/1. In terms of biological role, involved in the gluconeogenesis. Catalyzes stereospecifically the conversion of dihydroxyacetone phosphate (DHAP) to D-glyceraldehyde-3-phosphate (G3P). The chain is Triosephosphate isomerase from Shewanella sp. (strain MR-7).